We begin with the raw amino-acid sequence, 208 residues long: Na(+)-translocating NADH-quinone reductase subunit D (208 aa).

The next 5 helical transmembrane spans lie at 42–62 (FVMA…VSLI), 72–92 (IIVQ…ILKA), 103–123 (VFVG…AFAM), 131–151 (FVDG…VAFF), and 178–198 (NGLF…IWGL).

Belongs to the NqrDE/RnfAE family. As to quaternary structure, composed of six subunits; NqrA, NqrB, NqrC, NqrD, NqrE and NqrF.

The protein resides in the cell inner membrane. It carries out the reaction a ubiquinone + n Na(+)(in) + NADH + H(+) = a ubiquinol + n Na(+)(out) + NAD(+). NQR complex catalyzes the reduction of ubiquinone-1 to ubiquinol by two successive reactions, coupled with the transport of Na(+) ions from the cytoplasm to the periplasm. NqrA to NqrE are probably involved in the second step, the conversion of ubisemiquinone to ubiquinol. The chain is Na(+)-translocating NADH-quinone reductase subunit D from Haemophilus influenzae (strain 86-028NP).